Reading from the N-terminus, the 261-residue chain is Pyridoxine 5'-phosphate synthase (261 aa).

Asparagine 6 contacts 3-amino-2-oxopropyl phosphate. 8-9 lines the 1-deoxy-D-xylulose 5-phosphate pocket; it reads DH. Arginine 17 serves as a coordination point for 3-amino-2-oxopropyl phosphate. Histidine 42 (proton acceptor) is an active-site residue. 2 residues coordinate 1-deoxy-D-xylulose 5-phosphate: arginine 44 and histidine 49. Catalysis depends on glutamate 69, which acts as the Proton acceptor. Residue threonine 99 coordinates 1-deoxy-D-xylulose 5-phosphate. The Proton donor role is filled by histidine 213. Residues glycine 214 and 235-236 each bind 3-amino-2-oxopropyl phosphate; that span reads GQ.

The protein belongs to the PNP synthase family. As to quaternary structure, homooctamer; tetramer of dimers.

It is found in the cytoplasm. It catalyses the reaction 3-amino-2-oxopropyl phosphate + 1-deoxy-D-xylulose 5-phosphate = pyridoxine 5'-phosphate + phosphate + 2 H2O + H(+). It participates in cofactor biosynthesis; pyridoxine 5'-phosphate biosynthesis; pyridoxine 5'-phosphate from D-erythrose 4-phosphate: step 5/5. Catalyzes the complicated ring closure reaction between the two acyclic compounds 1-deoxy-D-xylulose-5-phosphate (DXP) and 3-amino-2-oxopropyl phosphate (1-amino-acetone-3-phosphate or AAP) to form pyridoxine 5'-phosphate (PNP) and inorganic phosphate. The polypeptide is Pyridoxine 5'-phosphate synthase (Aliarcobacter butzleri (strain RM4018) (Arcobacter butzleri)).